Consider the following 103-residue polypeptide: Putative glutaredoxin-C12 (103 aa).

The region spanning 1–102 (MERVRDLASE…QMLKASNAIW (102 aa)) is the Glutaredoxin domain. A disulfide bond links C21 and C24.

It belongs to the glutaredoxin family. CC-type subfamily.

It is found in the cytoplasm. Its function is as follows. Has a glutathione-disulfide oxidoreductase activity in the presence of NADPH and glutathione reductase. Reduces low molecular weight disulfides and proteins. The polypeptide is Putative glutaredoxin-C12 (GRXC12) (Arabidopsis thaliana (Mouse-ear cress)).